A 354-amino-acid polypeptide reads, in one-letter code: G-protein coupled estrogen receptor 1 (354 aa).

The Extracellular portion of the chain corresponds to methionine 1–tyrosine 40. Residues valine 41–glycine 61 traverse the membrane as a helical segment. The Cytoplasmic segment spans residues asparagine 62–leucine 81. A helical transmembrane segment spans residues tyrosine 82–phenylalanine 102. Residues asparagine 103 to alanine 112 are Extracellular-facing. Residues valine 113–leucine 133 traverse the membrane as a helical segment. The cysteines at positions 115 and 192 are disulfide-linked. The Cytoplasmic portion of the chain corresponds to threonine 134 to lysine 160. A helical membrane pass occupies residues leucine 161–valine 181. Residues glutamine 182–leucine 202 lie on the Extracellular side of the membrane. Residues glutamate 203–glycine 223 traverse the membrane as a helical segment. The Cytoplasmic segment spans residues arginine 224 to methionine 245. Residues isoleucine 246–isoleucine 266 traverse the membrane as a helical segment. Over glutamine 267 to histidine 292 the chain is Extracellular. The chain crosses the membrane as a helical span at residues isoleucine 293–glycine 313. The Cytoplasmic segment spans residues glutamate 314–glutamate 353.

This sequence belongs to the G-protein coupled receptor 1 family. As to quaternary structure, homodimer. Heterodimer. As to expression, expressed in oocytes (at protein level). Highly expressed in brain, heart, testis and ovary. Weakly expressed in muscle and intestine.

Its subcellular location is the nucleus. The protein localises to the cytoplasm. It is found in the perinuclear region. It localises to the cytoskeleton. The protein resides in the cytoplasmic vesicle membrane. Its subcellular location is the cell membrane. The protein localises to the basolateral cell membrane. It is found in the endoplasmic reticulum membrane. It localises to the early endosome. The protein resides in the recycling endosome. Its subcellular location is the golgi apparatus. The protein localises to the trans-Golgi network. It is found in the golgi apparatus membrane. It localises to the cell projection. The protein resides in the dendrite. Its subcellular location is the dendritic spine membrane. The protein localises to the axon. It is found in the postsynaptic density. It localises to the mitochondrion membrane. Membrane G-protein coupled estrogen receptor that binds to 17-beta-estradiol (E2) with high affinity, leading to rapid and transient activation of numerous intracellular signaling pathways. Plays a role in the embryonic development of sensory and motor neurons. May induce apoptosis and reduce proliferation of brain cells. Involved in maintenance of meiotic arrest in oocytes. This is G-protein coupled estrogen receptor 1 (gper1) from Micropogonias undulatus (Atlantic croaker).